Here is a 226-residue protein sequence, read N- to C-terminus: 2-C-methyl-D-erythritol 4-phosphate cytidylyltransferase (226 aa).

The protein belongs to the IspD/TarI cytidylyltransferase family. IspD subfamily.

It catalyses the reaction 2-C-methyl-D-erythritol 4-phosphate + CTP + H(+) = 4-CDP-2-C-methyl-D-erythritol + diphosphate. It participates in isoprenoid biosynthesis; isopentenyl diphosphate biosynthesis via DXP pathway; isopentenyl diphosphate from 1-deoxy-D-xylulose 5-phosphate: step 2/6. Functionally, catalyzes the formation of 4-diphosphocytidyl-2-C-methyl-D-erythritol from CTP and 2-C-methyl-D-erythritol 4-phosphate (MEP). The sequence is that of 2-C-methyl-D-erythritol 4-phosphate cytidylyltransferase from Rhodococcus jostii (strain RHA1).